A 947-amino-acid polypeptide reads, in one-letter code: Plasma membrane ATPase 2 (947 aa).

The segment at 1–103 (MSSTEAKQYK…TDGVHAGQRV (103 aa)) is disordered. Topologically, residues 1–144 (MSSTEAKQYK…AEENESLIVK (144 aa)) are cytoplasmic. Residues 7-22 (KQYKEKPSKEYLHASD) show a composition bias toward basic and acidic residues. Residues 26 to 61 (PANNSAASSSSSSSTSTSASSSAAAVPRKAAAASAA) show a composition bias toward low complexity. Over residues 62 to 74 (DDSDSDEDIDQLI) the composition is skewed to acidic residues. Residues 145 to 165 (FLMFFVGPIQFVMEAAAILAA) traverse the membrane as a helical segment. The Extracellular segment spans residues 166–169 (GLSD). The helical transmembrane segment at 170-189 (WVDVGVICALLLLNASVGFI) threads the bilayer. Residues 190 to 320 (QEFQAGSIVD…VEGHFTEVLN (131 aa)) are Cytoplasmic-facing. The helical transmembrane segment at 321–342 (GIGIILLVLVIATLLLVWTACF) threads the bilayer. Over 343 to 353 (YRTVGIVSILR) the chain is Extracellular. Residues 354-376 (YTLGITIIGVPVGLPAVVTTTMA) traverse the membrane as a helical segment. Over 377–748 (VGAAYLAKKQ…IAILNNSLDI (372 aa)) the chain is Cytoplasmic. D407 serves as the catalytic 4-aspartylphosphate intermediate. Mg(2+)-binding residues include D663 and D667. The chain crosses the membrane as a helical span at residues 749 to 767 (NLIVFIAIFADVATLTIAY). The Extracellular portion of the chain corresponds to 768 to 783 (DNAPYAPEPVKWNLPR). The helical transmembrane segment at 784–803 (LWGMSIILGIVLAIGSWITL) threads the bilayer. Residues 804 to 853 (TTMFLPNGGIIQNFGAMNGVMFLQISLTENWLIFVTRAAGPFWSSIPSWQ) are Cytoplasmic-facing. Residues 854–874 (LAGAVFAVDIIATMFTLFGWW) traverse the membrane as a helical segment. Topologically, residues 875–886 (SENWTDIVSVVR) are extracellular. The helical transmembrane segment at 887–903 (VWIWSIGIFCVLGGFYY) threads the bilayer. The Cytoplasmic portion of the chain corresponds to 904–947 (IMSTSQAFDRLMNGKSLKEKKSTRSVEDFMAAMQRVSTQHEKSS).

It belongs to the cation transport ATPase (P-type) (TC 3.A.3) family. Type IIIA subfamily.

Its subcellular location is the cell membrane. The enzyme catalyses ATP + H2O + H(+)(in) = ADP + phosphate + 2 H(+)(out). Functionally, the plasma membrane ATPase of plants and fungi is a hydrogen ion pump. The proton gradient it generates drives the active transport of nutrients by H(+)-symport. The resulting external acidification and/or internal alkinization may mediate growth responses. The sequence is that of Plasma membrane ATPase 2 (PMA2) from Saccharomyces cerevisiae (strain ATCC 204508 / S288c) (Baker's yeast).